We begin with the raw amino-acid sequence, 523 residues long: Sialate O-acetylesterase (523 aa).

Positions 1-23 (MVAPGLVLGLVLPLILWADRSAG) are cleaved as a signal peptide. N-linked (GlcNAc...) asparagine glycosylation is found at Asn107, Asn138, Asn267, Asn290, Asn401, and Asn422.

It is found in the lysosome. It catalyses the reaction N-acetyl-9-O-acetylneuraminate + H2O = N-acetylneuraminate + acetate + H(+). The enzyme catalyses an Ac-O-9-sialoglycoconjugate + H2O = a sialoglycoconjugate + acetate + H(+). In terms of biological role, catalyzes the removal of O-acetyl ester groups from position 9 of the free diacetylated sialate N-acetyl-9-O-acetylneuraminate (Neu5,9Ac2) in the cytosol and of the diacetylated sialate residues of sialylglycoconjugates in the lysosomes. Together with the sialate-O-acetyltransferase they regulate the balance of acetylated sialoglycoconjugates, key players in various processes such as cell-cell interactions, host-pathogen recognition, and tumor antigenicity. In Pongo abelii (Sumatran orangutan), this protein is Sialate O-acetylesterase (SIAE).